The primary structure comprises 317 residues: Aspartate carbamoyltransferase catalytic subunit (317 aa).

Carbamoyl phosphate contacts are provided by arginine 65 and threonine 66. Lysine 93 contacts L-aspartate. Arginine 115, histidine 145, and glutamine 148 together coordinate carbamoyl phosphate. L-aspartate is bound by residues arginine 178 and arginine 233. Residues glycine 274 and proline 275 each coordinate carbamoyl phosphate.

Belongs to the aspartate/ornithine carbamoyltransferase superfamily. ATCase family. Heterododecamer (2C3:3R2) of six catalytic PyrB chains organized as two trimers (C3), and six regulatory PyrI chains organized as three dimers (R2).

The enzyme catalyses carbamoyl phosphate + L-aspartate = N-carbamoyl-L-aspartate + phosphate + H(+). It functions in the pathway pyrimidine metabolism; UMP biosynthesis via de novo pathway; (S)-dihydroorotate from bicarbonate: step 2/3. Its function is as follows. Catalyzes the condensation of carbamoyl phosphate and aspartate to form carbamoyl aspartate and inorganic phosphate, the committed step in the de novo pyrimidine nucleotide biosynthesis pathway. This chain is Aspartate carbamoyltransferase catalytic subunit, found in Methylobacillus flagellatus (strain ATCC 51484 / DSM 6875 / VKM B-1610 / KT).